Here is a 365-residue protein sequence, read N- to C-terminus: Geranylgeranyl pyrophosphate synthase (365 aa).

Polar residues predominate over residues Met-1 to Val-11. The interval Met-1–Thr-36 is disordered. Low complexity predominate over residues Ser-21–Ser-34. Residues Lys-78, Arg-81, and His-110 each contribute to the isopentenyl diphosphate site. 2 residues coordinate Mg(2+): Asp-117 and Asp-121. Residue Arg-126 coordinates dimethylallyl diphosphate. Isopentenyl diphosphate is bound at residue Arg-127. Lys-211, Thr-212, and Gln-247 together coordinate dimethylallyl diphosphate. Mg(2+) is bound at residue Asp-250. Residues Asn-254, Lys-263, and Lys-273 each coordinate dimethylallyl diphosphate.

Belongs to the FPP/GGPP synthase family. It depends on Mg(2+) as a cofactor.

The catalysed reaction is isopentenyl diphosphate + dimethylallyl diphosphate = (2E)-geranyl diphosphate + diphosphate. The enzyme catalyses isopentenyl diphosphate + (2E)-geranyl diphosphate = (2E,6E)-farnesyl diphosphate + diphosphate. It catalyses the reaction isopentenyl diphosphate + (2E,6E)-farnesyl diphosphate = (2E,6E,10E)-geranylgeranyl diphosphate + diphosphate. Functionally, geranylgeranyl pyrophosphate synthase that catalyzes the trans-addition of the three molecules of IPP onto DMAPP to form geranylgeranyl pyrophosphate. Does not show any monoterpene nor sesquiterpene synthase activity. The polypeptide is Geranylgeranyl pyrophosphate synthase (Melampsora lini (Rust fungus)).